A 168-amino-acid chain; its full sequence is Small ribosomal subunit protein uS8 (168 aa).

Residues 59 to 93 form a not found in other S8 sequences region; that stretch reads EEFKKMKELAEKSPNPKMRRYLQQLIDYNKGTQYP.

This sequence belongs to the universal ribosomal protein uS8 family. In terms of assembly, part of the 30S ribosomal subunit. Contacts proteins S5 and S12.

Its function is as follows. One of the primary rRNA binding proteins, it binds directly to 16S rRNA central domain where it helps coordinate assembly of the platform of the 30S subunit. The sequence is that of Small ribosomal subunit protein uS8 from Aquifex pyrophilus.